The chain runs to 116 residues: ATP-dependent Clp protease adapter protein ClpS (116 aa).

The segment covering 1–11 (MRRINTIMQGK) has biased composition (polar residues). Positions 1-23 (MRRINTIMQGKTNGGNGPESGTV) are disordered.

This sequence belongs to the ClpS family. As to quaternary structure, binds to the N-terminal domain of the chaperone ClpA.

In terms of biological role, involved in the modulation of the specificity of the ClpAP-mediated ATP-dependent protein degradation. This is ATP-dependent Clp protease adapter protein ClpS from Brucella abortus (strain S19).